The primary structure comprises 427 residues: O-methyltransferase sol2 (427 aa).

Asp-281 contributes to the S-adenosyl-L-methionine binding site. Residue His-327 is the Proton acceptor of the active site.

This sequence belongs to the class I-like SAM-binding methyltransferase superfamily. Cation-independent O-methyltransferase family. COMT subfamily.

Its pathway is phytotoxin biosynthesis. Its function is as follows. O-methyltransferase; part of the gene cluster that mediates the biosynthesis of the phytotoxin solanapyrone, a causal agent of early blight disease of potato and tomato. The prosolanapyrone synthase sol1 is a polyketide synthase that produces the octaketide desmethylprosolanapyrone I via sequential condensations of 7 malonyl-CoA units with one acetyl-CoA unit, and one methylation step. The octaketide backbone is further methylated by the sol2 O-methyltransferase to yield prosolanapyrone I. Prosolanapyrone I is hydroxylated to prosolanapyrone II by the cytochrome P450 monooxygenase sol6. The solanapyrone synthase sol5 then catalyzes the oxidation of prosolanapyrone II and the subsequent Diels Alder cycloisomerization of the product prosolanapyrone III to solanapyrones A and D. Solanapyrones A and D are then converted into solanapyrones B and E, respectively, by the sol3 dehydrogenase. The protein is O-methyltransferase sol2 (sol2) of Alternaria solani.